An 87-amino-acid chain; its full sequence is Large ribosomal subunit protein bL27 (87 aa).

This sequence belongs to the bacterial ribosomal protein bL27 family.

This is Large ribosomal subunit protein bL27 from Phocaeicola vulgatus (strain ATCC 8482 / DSM 1447 / JCM 5826 / CCUG 4940 / NBRC 14291 / NCTC 11154) (Bacteroides vulgatus).